We begin with the raw amino-acid sequence, 513 residues long: Cyclin-dependent kinase C-2 (513 aa).

Residues 25 to 325 (FEKLEQIGEG…AKDALDAEYF (301 aa)) enclose the Protein kinase domain. ATP is bound by residues 31–39 (IGEGTYGQV) and Lys-54. At Thr-35 the chain carries Phosphothreonine. Tyr-36 carries the post-translational modification Phosphotyrosine. Asp-164 functions as the Proton acceptor in the catalytic mechanism. Ser-191 is modified (phosphoserine). Phosphothreonine is present on Thr-198. Over residues 336-348 (SLPKYEASHEFQT) the composition is skewed to basic and acidic residues. The segment at 336 to 513 (SLPKYEASHE…RNQQQYGNWQ (178 aa)) is disordered. Positions 417–433 (PNRYPQGGNQGGYNPNR) are enriched in low complexity. Gly residues-rich tracts occupy residues 457 to 478 (GGGM…GVGG) and 485 to 494 (GPYGASGPGR). Over residues 497 to 513 (NYNQGGSRNQQQYGNWQ) the composition is skewed to polar residues.

It belongs to the protein kinase superfamily. CMGC Ser/Thr protein kinase family. CDC2/CDKX subfamily.

The catalysed reaction is L-seryl-[protein] + ATP = O-phospho-L-seryl-[protein] + ADP + H(+). It carries out the reaction L-threonyl-[protein] + ATP = O-phospho-L-threonyl-[protein] + ADP + H(+). It catalyses the reaction [DNA-directed RNA polymerase] + ATP = phospho-[DNA-directed RNA polymerase] + ADP + H(+). The sequence is that of Cyclin-dependent kinase C-2 (CDKC-2) from Oryza sativa subsp. japonica (Rice).